A 241-amino-acid chain; its full sequence is Nickel import ATP-binding protein LarO (241 aa).

In terms of domain architecture, ABC transporter spans 2–240 (IKLVNICYDY…QPARQAQLMT (239 aa)). 34–41 (GPNGSGKS) provides a ligand contact to ATP.

The protein belongs to the ABC transporter superfamily. In terms of assembly, may form an energy-coupling factor (ECF) transporter complex composed of an ATP-binding protein (A component, LarO), a transmembrane protein (T component, LarQ) and a fused possible substrate-capture protein (S component, LarMN) of unknown stoichiometry.

Its subcellular location is the cell membrane. Functionally, probable ATP-binding component of the energy-coupling factor (ECF) transporter complex LarMNQO involved in nickel import. LarO is presumably responsible for energy coupling to the transport system. This Lactiplantibacillus plantarum (strain ATCC BAA-793 / NCIMB 8826 / WCFS1) (Lactobacillus plantarum) protein is Nickel import ATP-binding protein LarO.